A 214-amino-acid polypeptide reads, in one-letter code: GTP-binding nuclear protein GSP1/Ran (214 aa).

In terms of domain architecture, Small GTPase Ran-type spans 4 to 168; it reads EVPTFKLVLV…LWLARKLAGN (165 aa). 15–22 contacts GTP; it reads DGGTGKTT. Residues 34–42 are switch-I; it reads KKYIATIGV. GTP-binding positions include glycine 65, 119–122, and 147–149; these read NKVD and SAK. The segment at 65 to 81 is switch-II; sequence GQEKFGGLRDGYYINAQ.

This sequence belongs to the small GTPase superfamily. Ran family. In terms of assembly, found in a nuclear export complex with RanGTP, exportin and pre-miRNA.

It localises to the nucleus. GTP-binding protein involved in nucleocytoplasmic transport. Required for the import of protein into the nucleus and also for RNA export. Involved in chromatin condensation and control of cell cycle. The chain is GTP-binding nuclear protein GSP1/Ran (GSP1) from Eremothecium gossypii (strain ATCC 10895 / CBS 109.51 / FGSC 9923 / NRRL Y-1056) (Yeast).